A 61-amino-acid polypeptide reads, in one-letter code: Metallothionein-II, hippocampal (61 aa).

M1 bears the N-acetylmethionine mark. The beta stretch occupies residues 1–29 (MDPNCSCATGGSCTCANSCTCKACKCASC). A divalent metal cation is bound by residues C5, C7, C13, C15, C19, C21, C24, C26, C29, C33, C34, C36, C37, C41, C44, C48, C50, C57, C59, and C60. The tract at residues 30–61 (KKSCCSCCPVGCAKCAQGCICKGASDKCSCCA) is alpha.

The protein belongs to the metallothionein superfamily. Type 1 family.

Functionally, metallothioneins have a high content of cysteine residues that bind various heavy metals; these proteins are transcriptionally regulated by both heavy metals and glucocorticoids. This isoform may play a role in regulating the transport, accumulation, and compartmentation of zinc in the hippocampus. The sequence is that of Metallothionein-II, hippocampal from Bos taurus (Bovine).